Reading from the N-terminus, the 200-residue chain is Endoribonuclease YbeY (200 aa).

Zn(2+) contacts are provided by His120, His124, and His130.

Belongs to the endoribonuclease YbeY family. Requires Zn(2+) as cofactor.

The protein resides in the cytoplasm. In terms of biological role, single strand-specific metallo-endoribonuclease involved in late-stage 70S ribosome quality control and in maturation of the 3' terminus of the 16S rRNA. This Corynebacterium efficiens (strain DSM 44549 / YS-314 / AJ 12310 / JCM 11189 / NBRC 100395) protein is Endoribonuclease YbeY.